Consider the following 38-residue polypeptide: Photosystem II reaction center protein L (38 aa).

A helical membrane pass occupies residues 17–37; it reads SLYWGLLLIFVLAILFSSYIF.

The protein belongs to the PsbL family. PSII is composed of 1 copy each of membrane proteins PsbA, PsbB, PsbC, PsbD, PsbE, PsbF, PsbH, PsbI, PsbJ, PsbK, PsbL, PsbM, PsbT, PsbX, PsbY, PsbZ, Psb30/Ycf12, at least 3 peripheral proteins of the oxygen-evolving complex and a large number of cofactors. It forms dimeric complexes.

It is found in the plastid. The protein resides in the chloroplast thylakoid membrane. Functionally, one of the components of the core complex of photosystem II (PSII). PSII is a light-driven water:plastoquinone oxidoreductase that uses light energy to abstract electrons from H(2)O, generating O(2) and a proton gradient subsequently used for ATP formation. It consists of a core antenna complex that captures photons, and an electron transfer chain that converts photonic excitation into a charge separation. This subunit is found at the monomer-monomer interface and is required for correct PSII assembly and/or dimerization. The chain is Photosystem II reaction center protein L from Mesostigma viride (Green alga).